Here is a 424-residue protein sequence, read N- to C-terminus: Phosphatidylinositol transfer protein sfh5 (424 aa).

Polar residues-rich tracts occupy residues 1-16 (MSVTMADQQPEKTTAP) and 50-68 (ATTTAQPAVETTATQSGTA). The interval 1-98 (MSVTMADQQP…EEKPVAQQPE (98 aa)) is disordered. Residues 188-363 (KFGGLGYLTT…VYGGSAPALQ (176 aa)) form the CRAL-TRIO domain. 5 residues coordinate heme: tyrosine 213, arginine 233, histidine 267, tyrosine 269, and lysine 303. The tract at residues 372–424 (IQDESAPAATEQSKEQANKEEAAQEESKPESAPEQPKADPDVIVQEAPAADAK) is disordered. The segment covering 383–411 (QSKEQANKEEAAQEESKPESAPEQPKADP) has biased composition (basic and acidic residues).

This sequence belongs to the SFH5 family. Heme b serves as cofactor.

The protein resides in the cytoplasm. It is found in the endoplasmic reticulum membrane. It localises to the microsome membrane. The enzyme catalyses a 1,2-diacyl-sn-glycero-3-phospho-(1D-myo-inositol)(in) = a 1,2-diacyl-sn-glycero-3-phospho-(1D-myo-inositol)(out). Its function is as follows. Non-classical phosphatidylinositol (PtdIns) transfer protein (PITP), which exhibits PtdIns-binding/transfer activity in the absence of detectable PtdCho-binding/transfer activity. Regulates PtdIns(4,5)P2 homeostasis at the plasma membrane. Heme-binding protein that may play a role in organic oxidant-induced stress responses. This is Phosphatidylinositol transfer protein sfh5 (sfh5) from Aspergillus fumigatus (strain ATCC MYA-4609 / CBS 101355 / FGSC A1100 / Af293) (Neosartorya fumigata).